Reading from the N-terminus, the 426-residue chain is DUF724 domain-containing protein 9 (426 aa).

2 stretches are compositionally biased toward polar residues: residues 164-184 (ESSL…NANE) and 213-222 (PRNQNASVND). Positions 164–248 (ESSLTQGSGD…REESLCSDAS (85 aa)) are disordered. Basic and acidic residues predominate over residues 223–242 (STRENENSEDINRKRKREES). In terms of domain architecture, DUF724 spans 256 to 425 (LPFEKKLSIW…LQFQTTASAP (170 aa)). Positions 370-402 (AEKESIKIENERKILELQRLNEEVDKEIAQSKS) form a coiled coil.

As to expression, expressed in flowers.

It is found in the nucleus. May be involved in the polar growth of plant cells via transportation of RNAs. This chain is DUF724 domain-containing protein 9, found in Arabidopsis thaliana (Mouse-ear cress).